The primary structure comprises 439 residues: Protein ABHD8 (439 aa).

2 disordered regions span residues 49–70 (AGPA…AAQG) and 124–156 (PAGS…RPKR). Gly residues predominate over residues 136–145 (AGSGSGSGSG). Over residues 146-156 (GRRRRARRPKR) the composition is skewed to basic residues. In terms of domain architecture, AB hydrolase-1 spans 177–279 (VLFFIHGVGG…HKVIMINGGG (103 aa)). Active-site charge relay system residues include serine 252, aspartate 370, and histidine 398.

The protein belongs to the AB hydrolase superfamily. As to quaternary structure, interacts with NLRP3 (via NACHT and LLR domains); this interaction is enhanced in the presence of NLRP3 inflammasome inducers, such as ATP, nigericin, silica, or alum. Interacts with ZDHHC12. (Microbial infection) Interacts with SARS-CoV-2 nucleoprotein N; this interaction disrupts the NLRP3-ABHD8 association, enhancing NLRP3 stability, ultimately leading to increased inflammasome activation.

It is found in the cytoplasm. In terms of biological role, negatively regulates NLRP3-driven inflammation. Promotes NLRP3 degradation through the chaperone-mediated autophagy (CMA) pathway, hence attenuating inflammasome activation and IL1B secretion. Acts by recruiting palmitoyltransferase ZDHHC12 to NLRP3, facilitating NLRP3 palmitoylation and subsequent degradation. The chain is Protein ABHD8 from Homo sapiens (Human).